The primary structure comprises 212 residues: Guanylate kinase (212 aa).

One can recognise a Guanylate kinase-like domain in the interval 7-187; the sequence is GLLIVLSGPS…AADRIIAIIR (181 aa). 14–21 is an ATP binding site; sequence GPSGVGKA.

The protein belongs to the guanylate kinase family.

It localises to the cytoplasm. The enzyme catalyses GMP + ATP = GDP + ADP. In terms of biological role, essential for recycling GMP and indirectly, cGMP. This is Guanylate kinase from Onion yellows phytoplasma (strain OY-M).